The sequence spans 255 residues: Imidazole glycerol phosphate synthase subunit HisF (255 aa).

Active-site residues include D11 and D130.

This sequence belongs to the HisA/HisF family. Heterodimer of HisH and HisF.

It is found in the cytoplasm. It carries out the reaction 5-[(5-phospho-1-deoxy-D-ribulos-1-ylimino)methylamino]-1-(5-phospho-beta-D-ribosyl)imidazole-4-carboxamide + L-glutamine = D-erythro-1-(imidazol-4-yl)glycerol 3-phosphate + 5-amino-1-(5-phospho-beta-D-ribosyl)imidazole-4-carboxamide + L-glutamate + H(+). It functions in the pathway amino-acid biosynthesis; L-histidine biosynthesis; L-histidine from 5-phospho-alpha-D-ribose 1-diphosphate: step 5/9. Functionally, IGPS catalyzes the conversion of PRFAR and glutamine to IGP, AICAR and glutamate. The HisF subunit catalyzes the cyclization activity that produces IGP and AICAR from PRFAR using the ammonia provided by the HisH subunit. In Prochlorococcus marinus subsp. pastoris (strain CCMP1986 / NIES-2087 / MED4), this protein is Imidazole glycerol phosphate synthase subunit HisF.